Reading from the N-terminus, the 274-residue chain is Thiazole synthase (274 aa).

Lys115 acts as the Schiff-base intermediate with DXP in catalysis. 1-deoxy-D-xylulose 5-phosphate is bound by residues Gly176, 202–203, and 224–225; these read AG and NS.

This sequence belongs to the ThiG family. In terms of assembly, homotetramer. Forms heterodimers with either ThiH or ThiS.

Its subcellular location is the cytoplasm. It carries out the reaction [ThiS sulfur-carrier protein]-C-terminal-Gly-aminoethanethioate + 2-iminoacetate + 1-deoxy-D-xylulose 5-phosphate = [ThiS sulfur-carrier protein]-C-terminal Gly-Gly + 2-[(2R,5Z)-2-carboxy-4-methylthiazol-5(2H)-ylidene]ethyl phosphate + 2 H2O + H(+). The protein operates within cofactor biosynthesis; thiamine diphosphate biosynthesis. In terms of biological role, catalyzes the rearrangement of 1-deoxy-D-xylulose 5-phosphate (DXP) to produce the thiazole phosphate moiety of thiamine. Sulfur is provided by the thiocarboxylate moiety of the carrier protein ThiS. In vitro, sulfur can be provided by H(2)S. This chain is Thiazole synthase, found in Psychrobacter cryohalolentis (strain ATCC BAA-1226 / DSM 17306 / VKM B-2378 / K5).